The following is a 249-amino-acid chain: Large ribosomal subunit protein uL4 (249 aa).

It belongs to the universal ribosomal protein uL4 family. As to quaternary structure, part of the 50S ribosomal subunit.

Functionally, one of the primary rRNA binding proteins, this protein initially binds near the 5'-end of the 23S rRNA. It is important during the early stages of 50S assembly. It makes multiple contacts with different domains of the 23S rRNA in the assembled 50S subunit and ribosome. Its function is as follows. Forms part of the polypeptide exit tunnel. The sequence is that of Large ribosomal subunit protein uL4 from Methanoculleus marisnigri (strain ATCC 35101 / DSM 1498 / JR1).